The following is a 461-amino-acid chain: Cysteine--tRNA ligase (461 aa).

Cysteine 28 contacts Zn(2+). A 'HIGH' region motif is present at residues valine 30–histidine 40. 3 residues coordinate Zn(2+): cysteine 209, histidine 234, and glutamate 238. The 'KMSKS' region motif lies at lysine 266–serine 270. An ATP-binding site is contributed by lysine 269.

Belongs to the class-I aminoacyl-tRNA synthetase family. Monomer. The cofactor is Zn(2+).

It is found in the cytoplasm. It catalyses the reaction tRNA(Cys) + L-cysteine + ATP = L-cysteinyl-tRNA(Cys) + AMP + diphosphate. The protein is Cysteine--tRNA ligase of Edwardsiella ictaluri (strain 93-146).